The sequence spans 235 residues: Small ribosomal subunit protein uS3 (235 aa).

Residues 39–107 (VRKFLLGQLS…PTKLNISEIR (69 aa)) enclose the KH type-2 domain.

It belongs to the universal ribosomal protein uS3 family. As to quaternary structure, part of the 30S ribosomal subunit. Forms a tight complex with proteins S10 and S14.

In terms of biological role, binds the lower part of the 30S subunit head. Binds mRNA in the 70S ribosome, positioning it for translation. The polypeptide is Small ribosomal subunit protein uS3 (Blochmanniella floridana).